A 438-amino-acid chain; its full sequence is 23S rRNA (uracil(1939)-C(5))-methyltransferase RlmD (438 aa).

In terms of domain architecture, TRAM spans 10–68 (KTKNVQTITADILDLDYQGLGVAKINGKTWFIENALPHEKVECRILEDKRQYGHAIVKK). Residues cysteine 81, cysteine 87, cysteine 90, and cysteine 168 each coordinate [4Fe-4S] cluster. 6 residues coordinate S-adenosyl-L-methionine: glutamine 271, phenylalanine 300, asparagine 305, glutamate 321, aspartate 348, and aspartate 369. Cysteine 395 serves as the catalytic Nucleophile.

The protein belongs to the class I-like SAM-binding methyltransferase superfamily. RNA M5U methyltransferase family. RlmD subfamily.

It carries out the reaction uridine(1939) in 23S rRNA + S-adenosyl-L-methionine = 5-methyluridine(1939) in 23S rRNA + S-adenosyl-L-homocysteine + H(+). Catalyzes the formation of 5-methyl-uridine at position 1939 (m5U1939) in 23S rRNA. The chain is 23S rRNA (uracil(1939)-C(5))-methyltransferase RlmD from Haemophilus influenzae (strain ATCC 51907 / DSM 11121 / KW20 / Rd).